A 664-amino-acid polypeptide reads, in one-letter code: Bifunctional polymyxin resistance protein ArnA (664 aa).

Positions 1–308 (MSTKAVVFAY…EFGLVAGSQM (308 aa)) are formyltransferase ArnAFT. Residue His-106 is the Proton donor; for formyltransferase activity of the active site. (6R)-10-formyltetrahydrofolate-binding positions include Arg-116 and 138–142 (VKRAD). The interval 318–664 (RRTRVLILGV…EAMAEKADQC (347 aa)) is dehydrogenase ArnADH. NAD(+) is bound by residues Asp-351 and 372-373 (DI). UDP-alpha-D-glucuronate-binding positions include Ala-397, Tyr-402, and 436–437 (TS). Glu-438 acts as the Proton acceptor; for decarboxylase activity in catalysis. UDP-alpha-D-glucuronate-binding positions include Arg-464, Asn-495, 529-538 (RLVDGGAQKR), and Tyr-616. The active-site Proton donor; for decarboxylase activity is the Arg-622.

This sequence in the N-terminal section; belongs to the Fmt family. UDP-L-Ara4N formyltransferase subfamily. In the C-terminal section; belongs to the NAD(P)-dependent epimerase/dehydratase family. UDP-glucuronic acid decarboxylase subfamily. As to quaternary structure, homohexamer, formed by a dimer of trimers.

It catalyses the reaction UDP-alpha-D-glucuronate + NAD(+) = UDP-beta-L-threo-pentopyranos-4-ulose + CO2 + NADH. It carries out the reaction UDP-4-amino-4-deoxy-beta-L-arabinose + (6R)-10-formyltetrahydrofolate = UDP-4-deoxy-4-formamido-beta-L-arabinose + (6S)-5,6,7,8-tetrahydrofolate + H(+). The protein operates within nucleotide-sugar biosynthesis; UDP-4-deoxy-4-formamido-beta-L-arabinose biosynthesis; UDP-4-deoxy-4-formamido-beta-L-arabinose from UDP-alpha-D-glucuronate: step 1/3. It functions in the pathway nucleotide-sugar biosynthesis; UDP-4-deoxy-4-formamido-beta-L-arabinose biosynthesis; UDP-4-deoxy-4-formamido-beta-L-arabinose from UDP-alpha-D-glucuronate: step 3/3. Its pathway is bacterial outer membrane biogenesis; lipopolysaccharide biosynthesis. Its function is as follows. Bifunctional enzyme that catalyzes the oxidative decarboxylation of UDP-glucuronic acid (UDP-GlcUA) to UDP-4-keto-arabinose (UDP-Ara4O) and the addition of a formyl group to UDP-4-amino-4-deoxy-L-arabinose (UDP-L-Ara4N) to form UDP-L-4-formamido-arabinose (UDP-L-Ara4FN). The modified arabinose is attached to lipid A and is required for resistance to polymyxin and cationic antimicrobial peptides. This Pseudomonas syringae pv. syringae (strain B728a) protein is Bifunctional polymyxin resistance protein ArnA.